Here is a 433-residue protein sequence, read N- to C-terminus: Phosphoglycerate kinase, chloroplastic (433 aa).

The transit peptide at 1-28 (GASFSLHVLSKINSYKSQSTKPIRGVAS) directs the protein to the chloroplast. Residues Ala-51, Asp-52, Asn-54, Arg-68, Ser-90, His-91, Gly-93, Arg-94, Arg-149, His-181, and Arg-182 each coordinate (2R)-3-phosphoglycerate. An ADP-binding site is contributed by Gly-227. Gly-227 is a CDP binding site. Lys-229 and Lys-233 together coordinate AMP. ATP is bound at residue Lys-233. Gly-251 is an ADP binding site. Gly-251 serves as a coordination point for CDP. Positions 252 and 324 each coordinate AMP. Positions 252 and 324 each coordinate ATP. Positions 349 and 354 each coordinate CDP. Phe-354 contributes to the ADP binding site. Residue Glu-355 coordinates AMP. ATP is bound by residues Glu-355, Asp-386, and Ser-387. Asp-386 is a Mg(2+) binding site.

It belongs to the phosphoglycerate kinase family. Monomer. It depends on Mg(2+) as a cofactor.

It is found in the plastid. Its subcellular location is the chloroplast. It catalyses the reaction (2R)-3-phosphoglycerate + ATP = (2R)-3-phospho-glyceroyl phosphate + ADP. It participates in carbohydrate biosynthesis; Calvin cycle. The polypeptide is Phosphoglycerate kinase, chloroplastic (Spinacia oleracea (Spinach)).